The following is a 96-amino-acid chain: Small ribosomal subunit protein bS6 (96 aa).

This sequence belongs to the bacterial ribosomal protein bS6 family.

Binds together with bS18 to 16S ribosomal RNA. In Streptococcus thermophilus (strain ATCC BAA-250 / LMG 18311), this protein is Small ribosomal subunit protein bS6.